Consider the following 1099-residue polypeptide: Transmembrane protein 132D (1099 aa).

Positions 1 to 30 (MCPSEMGTLWHHWSPVLISLAALFSKVTEG) are cleaved as a signal peptide. Residues 31–915 (RGILESIQRF…LMQASKGLSD (885 aa)) lie on the Extracellular side of the membrane. The N-linked (GlcNAc...) asparagine glycan is linked to Asn-505. Residues 797–858 (FGQNDANPNT…LMEGRGTTTD (62 aa)) form a disordered region. Over residues 835 to 848 (GSQEGQYYGSSSMG) the composition is skewed to low complexity. Residues 916–936 (LEIGMYALLGVFCLAILVFLI) form a helical membrane-spanning segment. Residues 937–1099 (NCVTFALKYR…NYMERLHENV (163 aa)) are Cytoplasmic-facing.

The protein belongs to the TMEM132 family. In terms of assembly, interacts (via C-terminus) with NCKAP. Expressed in mature oligodendrocytes. Detected in the brain, lung, pancreas and testis. Highly expressed in mature neurons of the adult nervous system.

Its subcellular location is the membrane. Regulate neuronals morphology via inhibition of the WAVE regulatory complex (WCR), a complex that controls F-actin cytoskeletal dynamics. This is Transmembrane protein 132D from Homo sapiens (Human).